Here is a 244-residue protein sequence, read N- to C-terminus: MVRVTLVNYTRRPLETITWAALVSYWDEWSTESFEKINEDDVKAHLPRILGYGHESILEHATFTFSIEGCSRVCTHQLVRHRIASYTQQSQRYIVLNEENVEETFVIPESIKKDRELYEKWKKAMAETIKLYKESLKRGIHQEDARFILPQAVRSKIVVTMNLRELKHFFGLRLCERAQWEIREVAWKMLEEIAKREELRPIIKWAKLGPRCIQLGYCPERELMPPGCFKRTRERWMKLLEKPL.

The ThyX domain occupies 2–207; that stretch reads VRVTLVNYTR…ELRPIIKWAK (206 aa). FAD-binding positions include Ser56, 80–82, and Gln88; that span reads RHR. DUMP is bound by residues 77 to 80, 88 to 92, and Arg146; these read QLVR and QQSQR. Positions 80–90 match the ThyX motif motif; that stretch reads RHRIASYTQQS. FAD-binding positions include 162–164 and His168; that span reads NLR. A dUMP-binding site is contributed by Arg173. The Involved in ionization of N3 of dUMP, leading to its activation role is filled by Arg173.

The protein belongs to the thymidylate synthase ThyX family. As to quaternary structure, homotetramer. FAD serves as cofactor.

The enzyme catalyses dUMP + (6R)-5,10-methylene-5,6,7,8-tetrahydrofolate + NADPH + H(+) = dTMP + (6S)-5,6,7,8-tetrahydrofolate + NADP(+). The protein operates within pyrimidine metabolism; dTTP biosynthesis. Its function is as follows. Catalyzes the reductive methylation of 2'-deoxyuridine-5'-monophosphate (dUMP) to 2'-deoxythymidine-5'-monophosphate (dTMP) while utilizing 5,10-methylenetetrahydrofolate (mTHF) as the methyl donor, and NADPH and FADH(2) as the reductant. The protein is Flavin-dependent thymidylate synthase of Pyrococcus abyssi (strain GE5 / Orsay).